A 390-amino-acid chain; its full sequence is Altered inheritance of mitochondria protein 6 (390 aa).

Positions 1–17 are cleaved as a signal peptide; the sequence is MLGLKGCLTILIGYVIA.

It belongs to the AIM6 family.

The polypeptide is Altered inheritance of mitochondria protein 6 (Saccharomyces cerevisiae (strain ATCC 204508 / S288c) (Baker's yeast)).